The sequence spans 424 residues: Galacturonokinase (424 aa).

Position 2 is an N-acetylserine (Ser2). 146–155 serves as a coordination point for ATP; sequence DSSGLSSSAA. Residue Asp197 is the Proton acceptor of the active site.

The protein belongs to the GHMP kinase family. The cofactor is Mg(2+). It depends on Mn(2+) as a cofactor. Ca(2+) serves as cofactor. Expressed in roots, stems, leaves, flowers and young siliques. Higher expression in the elongating middle stem region than in the lower or upper stem region.

The catalysed reaction is D-galacturonate + ATP = 1-phospho-alpha-D-galacturonate + ADP + H(+). Inhibited by EDTA and ADP. Sugar-1-kinase with a strict substrate specificity for the alpha-anomeric configuration of D-galacturonic acid (D-GalA) and ATP. Involved in the biosynthesis of UDP-galacturonic acid (UDP-GalA) from the salvaged GalA that is released during growth-dependent cell wall restructuring. The polypeptide is Galacturonokinase (GALAK) (Arabidopsis thaliana (Mouse-ear cress)).